Consider the following 395-residue polypeptide: Argininosuccinate synthase (395 aa).

ATP-binding positions include 10-18 (AYSGGLDTS) and A37. L-citrulline-binding residues include Y88 and S93. G118 contributes to the ATP binding site. The L-aspartate site is built by T120, N124, and D125. N124 contributes to the L-citrulline binding site. L-citrulline is bound by residues R128, S179, S188, E264, and Y276.

The protein belongs to the argininosuccinate synthase family. Type 1 subfamily. In terms of assembly, homotetramer.

It is found in the cytoplasm. The catalysed reaction is L-citrulline + L-aspartate + ATP = 2-(N(omega)-L-arginino)succinate + AMP + diphosphate + H(+). It functions in the pathway amino-acid biosynthesis; L-arginine biosynthesis; L-arginine from L-ornithine and carbamoyl phosphate: step 2/3. This chain is Argininosuccinate synthase, found in Pelagibacter ubique (strain HTCC1062).